Consider the following 153-residue polypeptide: Small ribosomal subunit protein uS12m (153 aa).

The transit peptide at 1-20 (MLSRFMSNTWCTPLRQAQRL) directs the protein to the mitochondrion.

This sequence belongs to the universal ribosomal protein uS12 family. As to quaternary structure, component of the mitochondrial small ribosomal subunit (mt-SSU). Mature yeast 74S mitochondrial ribosomes consist of a small (37S) and a large (54S) subunit. The 37S small subunit contains a 15S ribosomal RNA (15S mt-rRNA) and 34 different proteins. The 54S large subunit contains a 21S rRNA (21S mt-rRNA) and 46 different proteins. uS12m forms part of the decoding center of the mt-SSU.

It localises to the mitochondrion. In terms of biological role, component of the mitochondrial ribosome (mitoribosome), a dedicated translation machinery responsible for the synthesis of mitochondrial genome-encoded proteins, including at least some of the essential transmembrane subunits of the mitochondrial respiratory chain. The mitoribosomes are attached to the mitochondrial inner membrane and translation products are cotranslationally integrated into the membrane. uS12m is required for respiratory growth. The polypeptide is Small ribosomal subunit protein uS12m (MRPS12) (Saccharomyces cerevisiae (strain ATCC 204508 / S288c) (Baker's yeast)).